The following is a 64-amino-acid chain: MENTSITIEFSSKFWPYFTLIHMITTIISLLIIISIMIAILNKLCEYNVFHNKTFELPRARVNT.

The Intravirion portion of the chain corresponds to 1–20; that stretch reads MENTSITIEFSSKFWPYFTL. Residues 6–15 are interaction with host BCAP31; that stretch reads ITIEFSSKFW. A helical; Signal-anchor for type II membrane protein membrane pass occupies residues 21-44; sequence IHMITTIISLLIIISIMIAILNKL. An interaction with small-molecule inhibitor region spans residues 38-43; that stretch reads IAILNK. Topologically, residues 45–64 are virion surface; the sequence is CEYNVFHNKTFELPRARVNT. An N-linked (GlcNAc...) asparagine; by host glycan is attached at Asn52.

This sequence belongs to the orthopneumovirus small hydrophobic protein family. Homopentamer forming a funnel-like pore. Interacts with glycoprotein G; this interaction occurs on the surface of virion particles and infected cells. Interacts with host BCAP31 (via C-terminus); this interaction is direct. In terms of processing, four species of SH have been detected in infected cell cytoplasm: a 7.5 kDa non-glycosylated form (SH0), a 13-15 kDa form that contains one or two N-linked carbohydrate side chains of the high-mannose type (SHg), a 21-30 kDa polylactosaminoglycan-modified form of the protein (SHp), and the isoform generated by alternative translational initiation. Of these different forms, SH0 is by far the most abundant protein detected during virus infection. Post-translationally, tyrosine phosphorylated.

The protein localises to the virion membrane. Its subcellular location is the host cell membrane. It is found in the host Golgi apparatus membrane. It localises to the host endoplasmic reticulum membrane. Its activity is regulated as follows. Channel activity is inhibited by copper. Also inhibited by small-molecule pyronin B. In terms of biological role, viroporin that forms a homopentameric ion channel displaying low ion selectivity. May play a role in virus morphogenesis and pathogenicity at various stages of the viral life cycle. Accumulates at the membrane of the Golgi apparatus in infected cells and may facilitate virus release by modifying the secretory pathway. May enhance host membrane permeability and disrupt cellular ion homeostasis, which can be sensed as damage-associated molecular patterns/danger signals, triggering NLRP3 inflammasome activation and inflammatory immune response. Also inhibits host TNFA-mediated signaling pathway and may delay apoptosis, allowing time for the virus to replicate. The protein is Small hydrophobic protein of Homo sapiens (Human).